Reading from the N-terminus, the 342-residue chain is NADH-quinone oxidoreductase subunit H 1 (342 aa).

8 consecutive transmembrane segments (helical) span residues 7-27 (FLLE…VIAM), 78-98 (ALFI…GAVI), 120-140 (IGVL…MIGG), 166-186 (MGLS…GEIV), 193-213 (WWNI…SFAE), 245-265 (LFAE…FYFG), 284-304 (ILGT…FMWV), and 322-342 (KIMI…ILLF).

The protein belongs to the complex I subunit 1 family. As to quaternary structure, NDH-1 is composed of 14 different subunits. Subunits NuoA, H, J, K, L, M, N constitute the membrane sector of the complex.

It is found in the cell inner membrane. The catalysed reaction is a quinone + NADH + 5 H(+)(in) = a quinol + NAD(+) + 4 H(+)(out). Functionally, NDH-1 shuttles electrons from NADH, via FMN and iron-sulfur (Fe-S) centers, to quinones in the respiratory chain. The immediate electron acceptor for the enzyme in this species is believed to be ubiquinone. Couples the redox reaction to proton translocation (for every two electrons transferred, four hydrogen ions are translocated across the cytoplasmic membrane), and thus conserves the redox energy in a proton gradient. This subunit may bind ubiquinone. The sequence is that of NADH-quinone oxidoreductase subunit H 1 from Cytophaga hutchinsonii (strain ATCC 33406 / DSM 1761 / CIP 103989 / NBRC 15051 / NCIMB 9469 / D465).